The chain runs to 241 residues: Ribonuclease PH (241 aa).

Phosphate contacts are provided by residues arginine 87 and 125–127 (GTR).

This sequence belongs to the RNase PH family. In terms of assembly, homohexameric ring arranged as a trimer of dimers.

The enzyme catalyses tRNA(n+1) + phosphate = tRNA(n) + a ribonucleoside 5'-diphosphate. Functionally, phosphorolytic 3'-5' exoribonuclease that plays an important role in tRNA 3'-end maturation. Removes nucleotide residues following the 3'-CCA terminus of tRNAs; can also add nucleotides to the ends of RNA molecules by using nucleoside diphosphates as substrates, but this may not be physiologically important. Probably plays a role in initiation of 16S rRNA degradation (leading to ribosome degradation) during starvation. This Salinispora tropica (strain ATCC BAA-916 / DSM 44818 / JCM 13857 / NBRC 105044 / CNB-440) protein is Ribonuclease PH.